The primary structure comprises 529 residues: Chromosomal replication initiator protein DnaA (529 aa).

The domain I, interacts with DnaA modulators stretch occupies residues 1 to 72; sequence MQDFWHAASA…SLACDYWEAT (72 aa). A domain II region spans residues 72–192; it reads TVDVQFVLDP…HVDDSVHERS (121 aa). Positions 193–409 are domain III, AAA+ region; sequence RLNQILTFDN…GALRKILAYS (217 aa). Gly-237, Gly-239, Lys-240, and Thr-241 together coordinate ATP. Residues 410–529 form a domain IV, binds dsDNA region; that stretch reads NFHGKEITIE…LHVLEQTLKG (120 aa).

It belongs to the DnaA family. As to quaternary structure, oligomerizes as a right-handed, spiral filament on DNA at oriC.

The protein localises to the cytoplasm. Plays an essential role in the initiation and regulation of chromosomal replication. ATP-DnaA binds to the origin of replication (oriC) to initiate formation of the DNA replication initiation complex once per cell cycle. Binds the DnaA box (a 9 base pair repeat at the origin) and separates the double-stranded (ds)DNA. Forms a right-handed helical filament on oriC DNA; dsDNA binds to the exterior of the filament while single-stranded (ss)DNA is stabiized in the filament's interior. The ATP-DnaA-oriC complex binds and stabilizes one strand of the AT-rich DNA unwinding element (DUE), permitting loading of DNA polymerase. After initiation quickly degrades to an ADP-DnaA complex that is not apt for DNA replication. Binds acidic phospholipids. This is Chromosomal replication initiator protein DnaA from Ralstonia pickettii (strain 12J).